Consider the following 390-residue polypeptide: Phosphopentomutase (390 aa).

Aspartate 11, aspartate 283, histidine 288, aspartate 324, histidine 325, and histidine 336 together coordinate Mn(2+).

Belongs to the phosphopentomutase family. Mn(2+) is required as a cofactor.

The protein localises to the cytoplasm. The catalysed reaction is 2-deoxy-alpha-D-ribose 1-phosphate = 2-deoxy-D-ribose 5-phosphate. It carries out the reaction alpha-D-ribose 1-phosphate = D-ribose 5-phosphate. It participates in carbohydrate degradation; 2-deoxy-D-ribose 1-phosphate degradation; D-glyceraldehyde 3-phosphate and acetaldehyde from 2-deoxy-alpha-D-ribose 1-phosphate: step 1/2. Its function is as follows. Isomerase that catalyzes the conversion of deoxy-ribose 1-phosphate (dRib-1-P) and ribose 1-phosphate (Rib-1-P) to deoxy-ribose 5-phosphate (dRib-5-P) and ribose 5-phosphate (Rib-5-P), respectively. This is Phosphopentomutase from Clostridium novyi (strain NT).